The following is a 416-amino-acid chain: Serine hydroxymethyltransferase (416 aa).

(6S)-5,6,7,8-tetrahydrofolate-binding positions include L118 and 122 to 124; that span reads GHL. K227 carries the post-translational modification N6-(pyridoxal phosphate)lysine. (6S)-5,6,7,8-tetrahydrofolate-binding positions include E242 and 350–352; that span reads SPF.

It belongs to the SHMT family. As to quaternary structure, homodimer. It depends on pyridoxal 5'-phosphate as a cofactor.

It is found in the cytoplasm. It catalyses the reaction (6R)-5,10-methylene-5,6,7,8-tetrahydrofolate + glycine + H2O = (6S)-5,6,7,8-tetrahydrofolate + L-serine. It participates in one-carbon metabolism; tetrahydrofolate interconversion. Its pathway is amino-acid biosynthesis; glycine biosynthesis; glycine from L-serine: step 1/1. Functionally, catalyzes the reversible interconversion of serine and glycine with tetrahydrofolate (THF) serving as the one-carbon carrier. This reaction serves as the major source of one-carbon groups required for the biosynthesis of purines, thymidylate, methionine, and other important biomolecules. Also exhibits THF-independent aldolase activity toward beta-hydroxyamino acids, producing glycine and aldehydes, via a retro-aldol mechanism. The polypeptide is Serine hydroxymethyltransferase (Syntrophotalea carbinolica (strain DSM 2380 / NBRC 103641 / GraBd1) (Pelobacter carbinolicus)).